A 160-amino-acid chain; its full sequence is SsrA-binding protein (160 aa).

The protein belongs to the SmpB family.

The protein localises to the cytoplasm. Its function is as follows. Required for rescue of stalled ribosomes mediated by trans-translation. Binds to transfer-messenger RNA (tmRNA), required for stable association of tmRNA with ribosomes. tmRNA and SmpB together mimic tRNA shape, replacing the anticodon stem-loop with SmpB. tmRNA is encoded by the ssrA gene; the 2 termini fold to resemble tRNA(Ala) and it encodes a 'tag peptide', a short internal open reading frame. During trans-translation Ala-aminoacylated tmRNA acts like a tRNA, entering the A-site of stalled ribosomes, displacing the stalled mRNA. The ribosome then switches to translate the ORF on the tmRNA; the nascent peptide is terminated with the 'tag peptide' encoded by the tmRNA and targeted for degradation. The ribosome is freed to recommence translation, which seems to be the essential function of trans-translation. The polypeptide is SsrA-binding protein (Klebsiella pneumoniae (strain 342)).